Consider the following 209-residue polypeptide: Uracil phosphoribosyltransferase (209 aa).

5-phospho-alpha-D-ribose 1-diphosphate-binding positions include R79, R104, and 131–139 (DPMLATGGS). Residues I194 and 199 to 201 (GDA) each bind uracil. Residue D200 participates in 5-phospho-alpha-D-ribose 1-diphosphate binding.

The protein belongs to the UPRTase family. The cofactor is Mg(2+).

The catalysed reaction is UMP + diphosphate = 5-phospho-alpha-D-ribose 1-diphosphate + uracil. It functions in the pathway pyrimidine metabolism; UMP biosynthesis via salvage pathway; UMP from uracil: step 1/1. With respect to regulation, allosterically activated by GTP. In terms of biological role, catalyzes the conversion of uracil and 5-phospho-alpha-D-ribose 1-diphosphate (PRPP) to UMP and diphosphate. This is Uracil phosphoribosyltransferase from Anoxybacillus flavithermus (strain DSM 21510 / WK1).